Here is a 341-residue protein sequence, read N- to C-terminus: uncharacterized protein (341 aa).

10 consecutive transmembrane segments (helical) span residues 10–30 (ALGV…SFLT), 42–62 (PFLI…PWYF), 107–127 (LGFC…LGFT), 129–149 (VASF…LGTI), 155–175 (FTLS…IVVT), 192–212 (ALGN…SVMV), 226–246 (LFFG…LIIL), 263–283 (LIVL…WVIA), 290–310 (LLVT…DILL), and 313–333 (HYLN…FIVV).

This sequence belongs to the TPT transporter family.

It is found in the vacuole membrane. It localises to the golgi apparatus membrane. This is an uncharacterized protein from Schizosaccharomyces pombe (strain 972 / ATCC 24843) (Fission yeast).